Reading from the N-terminus, the 733-residue chain is 2'-5'-oligoadenylate synthase 2 (733 aa).

Gly2 carries the N-myristoyl glycine lipid modification. OAS domain stretches follow at residues 47 to 365 (VPSQ…CWDV) and 373 to 713 (TPSH…WKVP). At Lys408 the chain carries N6-acetyllysine. An ATP-binding site is contributed by Ser427. Mg(2+) is bound by residues Asp439, Asp441, and Asp510. ATP-binding residues include Arg574 and Lys577.

It belongs to the 2-5A synthase family. As to quaternary structure, homodimer. The cofactor is Mg(2+). Myristoylation is not essential for its activity. In terms of processing, glycosylated. Glycosylation is essential for its activity.

The protein localises to the cytoplasm. It is found in the perinuclear region. It catalyses the reaction 3 ATP = 5'-triphosphoadenylyl-(2'-&gt;5')-adenylyl-(2'-&gt;5')-adenosine + 2 diphosphate. With respect to regulation, produced as a latent enzyme which is activated by double stranded RNA (dsRNA) generated during the course of viral infection. The dsRNA activator must be at least 15 nucleotides long, and no modification of the 2'-hydroxyl group is tolerated. ssRNA or dsDNA do not act as activators. Strongly inhibited by copper, iron and zinc ions. Partially inhibited by cobalt and nickel ions. Interferon-induced, dsRNA-activated antiviral enzyme which plays a critical role in cellular innate antiviral response. Activated by detection of double stranded RNA (dsRNA): polymerizes higher oligomers of 2'-5'-oligoadenylates (2-5A) from ATP which then bind to the inactive monomeric form of ribonuclease L (RNASEL) leading to its dimerization and subsequent activation. Activation of RNASEL leads to degradation of cellular as well as viral RNA, resulting in the inhibition of protein synthesis, thus terminating viral replication. Can mediate the antiviral effect via the classical RNASEL-dependent pathway or an alternative antiviral pathway independent of RNASEL. In addition, it may also play a role in other cellular processes such as apoptosis, cell growth, differentiation and gene regulation. May act as a negative regulator of lactation, stopping lactation in virally infected mammary gland lobules, thereby preventing transmission of viruses to neonates. Non-infected lobules would not be affected, allowing efficient pup feeding during infection. The chain is 2'-5'-oligoadenylate synthase 2 (Oas2) from Rattus norvegicus (Rat).